A 1063-amino-acid chain; its full sequence is Valine--tRNA ligase, mitochondrial (1063 aa).

The N-terminal 26 residues, 1-26 (MPHLPLASFRPPFWGLRHSRGLPRFH), are a transit peptide targeting the mitochondrion. Residues 25 to 53 (FHSVSTQSEPHGSPISRRNREAKQKRLRE) form a disordered region. A compositionally biased stretch (basic and acidic residues) spans 42–53 (RNREAKQKRLRE). Residues 146–156 (PNVTGSLHIGH) carry the 'HIGH' region motif. Residues 658-662 (KMSKS) carry the 'KMSKS' region motif. Residue Lys-661 coordinates ATP.

The protein belongs to the class-I aminoacyl-tRNA synthetase family.

The protein localises to the mitochondrion. The enzyme catalyses tRNA(Val) + L-valine + ATP = L-valyl-tRNA(Val) + AMP + diphosphate. Its function is as follows. Catalyzes the attachment of valine to tRNA(Val) in a two-step reaction: valine is first activated by ATP to form Val-AMP and then transferred to the acceptor end of tRNA(Val). This Homo sapiens (Human) protein is Valine--tRNA ligase, mitochondrial (VARS2).